We begin with the raw amino-acid sequence, 141 residues long: Putative pre-16S rRNA nuclease (141 aa).

It belongs to the YqgF nuclease family.

The protein resides in the cytoplasm. Its function is as follows. Could be a nuclease involved in processing of the 5'-end of pre-16S rRNA. This chain is Putative pre-16S rRNA nuclease, found in Syntrophomonas wolfei subsp. wolfei (strain DSM 2245B / Goettingen).